We begin with the raw amino-acid sequence, 305 residues long: Sulfate adenylyltransferase subunit 2 (305 aa).

It belongs to the PAPS reductase family. CysD subfamily. In terms of assembly, heterodimer composed of CysD, the smaller subunit, and CysN.

The enzyme catalyses sulfate + ATP + H(+) = adenosine 5'-phosphosulfate + diphosphate. Its pathway is sulfur metabolism; hydrogen sulfide biosynthesis; sulfite from sulfate: step 1/3. Functionally, with CysN forms the ATP sulfurylase (ATPS) that catalyzes the adenylation of sulfate producing adenosine 5'-phosphosulfate (APS) and diphosphate, the first enzymatic step in sulfur assimilation pathway. APS synthesis involves the formation of a high-energy phosphoric-sulfuric acid anhydride bond driven by GTP hydrolysis by CysN coupled to ATP hydrolysis by CysD. In Pseudomonas fluorescens (strain Pf0-1), this protein is Sulfate adenylyltransferase subunit 2.